Reading from the N-terminus, the 1062-residue chain is MLQRIREVVSLANNPATDAVTKKQALDYLEQMKSDPNAIQIFCSMLTDSGSDDLCIFVSLQILCDLVAMNTSVDLLFVKNSIVEFLRGKINRNIKDAEFLRNKISELITRLFINMYGEVNGNQWNTFYKDLIALLSIDSLLTGPSEHFSPLGLDYFARICIQINSEVADQTFLRSKDEQTKNNNLKDTMRLEDVQTLVTIWFNCLKSLIIQQQNFELAVIILSCIGAFISWVDITLIVNPEYINIIYGYLDYSDTKIACSQCLCEIISKKMKPVDKLTLLSMLNLTDKVASIGEDDIDVYEKLAKLASSVGLELSIILEQCNEGVQSNETLEVANAADQQVLNQVAPLVLKFMSHEYDSVTEQCFPFISQYLAILKKLFAIGGKPGTAVAINSKRQPLDEAHQNFLVSLLNVCFEKMKIDDSSESNSEEAIEEFNDIVRSKLKVFQDSIAVINPNIYLENISNHIQVSLAGTDWTVLELAIFQMHNLCESIRNNLFGLNKTEISTSAATQLMHKFMALLLQNSNLFQMDNRYVQILFFELVVRHYTFLGSDTKDAVSLLNIFCSEFGMFNKSEKVILRTWYLFTRFVKISKPHLSVSVLSQLVSKVMPLLVIKTVTPSVDGSEDCDTTFDSQLYIFEGVGMLIGANADNTYDILDQVLTPLFTDLERCISLQSQSPSIVLQSHHILMAIGTLARGTHMGLVPENQVNNALVNEKLIHRTLIEKFSNIAEVVLVTFSYFNKHETIRDASRFTFARLIPILNGGIVTFASKLVVLFLESDLKTMEMNDFLGFLGQMVHTFHGDENFYDLFDNLLTPVINKLHILLDHLESESNESNWYGEQNGRENNGNDVSGARTSKTVVVTDSYRDKILLKKAYYGFLQSFVTNNVTSLLLSNRNRSILPTILGDLLSYNPQEIQETSTMKLALNVLVNFIKFFGSGGCTDVNDVHASSIGKLDGLNEYFITRTIPLAFEIPFKPQYKFNINDGSCRVIACDLSRVLKEMYIQSGGGQDVNSNPALKYLTEVYFPQIQLPSELGMELIQMLITQDTKAFEKYYVTLINRLTS.

This sequence belongs to the exportin family.

The protein resides in the nucleus. It is found in the cytoplasm. In terms of biological role, tRNA nucleus export receptor which facilitates tRNA translocation across the nuclear pore complex. Involved in pre-tRNA splicing, probably by affecting the interaction of pre-tRNA with splicing endonuclease. This chain is Exportin-T (LOS1), found in Vanderwaltozyma polyspora (strain ATCC 22028 / DSM 70294 / BCRC 21397 / CBS 2163 / NBRC 10782 / NRRL Y-8283 / UCD 57-17) (Kluyveromyces polysporus).